We begin with the raw amino-acid sequence, 1253 residues long: Methionine synthase (1253 aa).

Positions 6 to 326 (QDEIEAILRK…DHIREIAEAV (321 aa)) constitute a Hcy-binding domain. Residues C248, C311, and C312 each contribute to the Zn(2+) site. Residues 359–620 (FVNIGERCNV…IHKDLLQLCE (262 aa)) enclose the Pterin-binding domain. (6S)-5,6,7,8-tetrahydrofolate is bound by residues 370 to 372 (GSR), D437, N458, D525, N567, R573, and R579. One can recognise a B12-binding N-terminal domain in the interval 650-747 (QTDEWRNGSI…FMEKEREEAR (98 aa)). Methylcob(III)alamin is bound by residues E697, 770-774 (GDVHD), H773, S818, T822, and A874. Positions 760–895 (QGTIVLATVK…DENLRDDYFE (136 aa)) constitute a B12-binding domain. An AdoMet activation domain is found at 911–1253 (SLKERKYVPL…LGPILGYDTD (343 aa)). Residues D962, R1160, and 1215–1216 (YF) each bind S-adenosyl-L-methionine. T1252 carries the post-translational modification Phosphothreonine.

The protein belongs to the vitamin-B12 dependent methionine synthase family. In terms of assembly, monomer. Dimer. Forms a multiprotein complex with MMACHC, MMADHC and MTRR. It depends on methylcob(III)alamin as a cofactor. Requires Zn(2+) as cofactor.

It is found in the cytoplasm. It catalyses the reaction (6S)-5-methyl-5,6,7,8-tetrahydrofolate + L-homocysteine = (6S)-5,6,7,8-tetrahydrofolate + L-methionine. It participates in amino-acid biosynthesis; L-methionine biosynthesis via de novo pathway; L-methionine from L-homocysteine (MetH route): step 1/1. Its function is as follows. Catalyzes the transfer of a methyl group from methylcob(III)alamin (MeCbl) to homocysteine, yielding enzyme-bound cob(I)alamin and methionine in the cytosol. MeCbl is an active form of cobalamin (vitamin B12) used as a cofactor for methionine biosynthesis. Cob(I)alamin form is regenerated to MeCbl by a transfer of a methyl group from 5-methyltetrahydrofolate. The processing of cobalamin in the cytosol occurs in a multiprotein complex composed of at least MMACHC, MMADHC, MTRR (methionine synthase reductase) and MTR which may contribute to shuttle safely and efficiently cobalamin towards MTR in order to produce methionine. The protein is Methionine synthase of Mus musculus (Mouse).